Here is a 173-residue protein sequence, read N- to C-terminus: Transmembrane protein 278 (173 aa).

Positions 1–14 (MSEQERETEEDEGV) are enriched in acidic residues. Positions 1–25 (MSEQERETEEDEGVASDTAPMLPRR) are disordered. 3 consecutive transmembrane segments (helical) span residues 31–51 (HISV…VLSG), 53–73 (ALVG…LVLL), and 107–127 (AALI…AAAA). The segment at 141 to 165 (DPARTPAPRRPPRSSGDLADGHPDE) is disordered.

The protein belongs to the TMEM88 family.

The protein resides in the membrane. In Mus musculus (Mouse), this protein is Transmembrane protein 278 (Tmem278).